Reading from the N-terminus, the 160-residue chain is Ureidoglycolate lyase (160 aa).

This sequence belongs to the ureidoglycolate lyase family. Homodimer. Ni(2+) serves as cofactor.

The catalysed reaction is (S)-ureidoglycolate = urea + glyoxylate. It participates in nitrogen metabolism; (S)-allantoin degradation. In terms of biological role, catalyzes the catabolism of the allantoin degradation intermediate (S)-ureidoglycolate, generating urea and glyoxylate. Involved in the utilization of allantoin as nitrogen source. In Salmonella gallinarum (strain 287/91 / NCTC 13346), this protein is Ureidoglycolate lyase.